The sequence spans 75 residues: Putative antitoxin VapB12 (75 aa).

Putative antitoxin component of a possible type II toxin-antitoxin (TA) system. The cognate toxin is VapC12. This Mycobacterium tuberculosis (strain CDC 1551 / Oshkosh) protein is Putative antitoxin VapB12 (vapB12).